The sequence spans 393 residues: MANSYREMLYWFGKTIDRNLPYVNTNGWRKQKGRKDGICLNCLDECKLYSCDHCGIKHKCGNCVLSECFLDVKNEFNKYRWLVFDEEPDQAVLLQHWIMYKDYFLQKFNYRLATQAKILNMNKNQKFQLNEGRKRALSVPITSQFLKFRLFGKIYIQFGTIMTNKIQPWLELSTLKIGYLQLLNVERCSELMATRGQFTTNVAKTACITEIKCRRPIYDNDCIIEAYLDKNDRGWKFAAILGRRKIPVTQKLAMEYFMKSLRAELFYYAHSRCHTLSNCPRWNEGLRLLNSSTLNIVFRRQFMNEIVEWFEIFSQYTGSHYEFITECVHDKSAITAFKQEIEDYIKEGKQITLKSVVPEEHAAYRHILRLRESLMLAIDAALSRIRSQSMGVL.

Residues 2–79 form an RNA-binding region; that stretch reads ANSYREMLYW…LDVKNEFNKY (78 aa). The tract at residues 39-77 is zinc-binding domain; the sequence is CLNCLDECKLYSCDHCGIKHKCGNCVLSECFLDVKNEFN. The tract at residues 80–170 is important for cytoskeleton localization; it reads RWLVFDEEPD…IMTNKIQPWL (91 aa). An interaction with host IRF3 region spans residues 267–393; it reads YYAHSRCHTL…RIRSQSMGVL (127 aa).

It belongs to the rotavirus NSP1 family. In terms of assembly, interacts (via C-terminus) with host IRF3; this interaction leads to IRF3 degradation. Interacts with host IRF7; this interaction leads to IRF7 degradation. Interacts with host CUL1 and CUL3.

The protein resides in the host cytoplasm. Its subcellular location is the host cytoskeleton. Functionally, plays a role in the inhibition of host innate immunity by inducing the degradation of key host factors required to activate interferon production such as IRF3, IRF5 or IRF7. Associates with components of cullin RING ligases (CRLs) including CUL1 or CUL3, which are essential multisubunit ubiquitination complexes, to modulate their activities. The polypeptide is Non-structural protein 1 (Sus scrofa (Pig)).